Here is a 587-residue protein sequence, read N- to C-terminus: Folylpolyglutamate synthase, mitochondrial (587 aa).

A mitochondrion-targeting transit peptide spans 1–42; sequence MSWARTHLRSALSLAAVSARGATTEGAARRWLSAWPAPQEPG. Position 106–109 (106–109) interacts with ATP; sequence GKGS. Mg(2+) is bound by residues Ser-130, Glu-200, and His-228. Positions 363 and 377 each coordinate ATP. Positions 484–508 are disordered; the sequence is PDFLSSPSPEPGRPGSLQPALRPPH. Position 539 is a phosphoserine (Ser-539).

Belongs to the folylpolyglutamate synthase family. In terms of assembly, monomer. The cofactor is a monovalent cation.

Its subcellular location is the mitochondrion inner membrane. The protein localises to the mitochondrion matrix. It is found in the cytoplasm. The catalysed reaction is (6S)-5,6,7,8-tetrahydrofolyl-(gamma-L-Glu)(n) + L-glutamate + ATP = (6S)-5,6,7,8-tetrahydrofolyl-(gamma-L-Glu)(n+1) + ADP + phosphate + H(+). Its pathway is cofactor biosynthesis; tetrahydrofolylpolyglutamate biosynthesis. Its function is as follows. Catalyzes conversion of folates to polyglutamate derivatives allowing concentration of folate compounds in the cell and the intracellular retention of these cofactors, which are important substrates for most of the folate-dependent enzymes that are involved in one-carbon transfer reactions involved in purine, pyrimidine and amino acid synthesis. This is Folylpolyglutamate synthase, mitochondrial (FPGS) from Cricetulus griseus (Chinese hamster).